Reading from the N-terminus, the 389-residue chain is ATP phosphoribosyltransferase regulatory subunit (389 aa).

This sequence belongs to the class-II aminoacyl-tRNA synthetase family. HisZ subfamily. Heteromultimer composed of HisG and HisZ subunits.

The protein localises to the cytoplasm. It participates in amino-acid biosynthesis; L-histidine biosynthesis; L-histidine from 5-phospho-alpha-D-ribose 1-diphosphate: step 1/9. In terms of biological role, required for the first step of histidine biosynthesis. May allow the feedback regulation of ATP phosphoribosyltransferase activity by histidine. The protein is ATP phosphoribosyltransferase regulatory subunit of Hydrogenovibrio crunogenus (strain DSM 25203 / XCL-2) (Thiomicrospira crunogena).